The following is a 299-amino-acid chain: tRNA pseudouridine synthase B (299 aa).

The active-site Nucleophile is the Asp49. Residues 241–299 enclose the PUA domain; the sequence is MPRVTVSGRAAARVLHGVAPAVRVEHPDGTTVAVVAANGALLALAEADGGGLRLRKVFG.

The protein belongs to the pseudouridine synthase TruB family. Type 1 subfamily.

It catalyses the reaction uridine(55) in tRNA = pseudouridine(55) in tRNA. Its function is as follows. Responsible for synthesis of pseudouridine from uracil-55 in the psi GC loop of transfer RNAs. The polypeptide is tRNA pseudouridine synthase B (Symbiobacterium thermophilum (strain DSM 24528 / JCM 14929 / IAM 14863 / T)).